An 81-amino-acid chain; its full sequence is Conotoxin Vc6.7 (81 aa).

A signal peptide spans 1–19; the sequence is MEKLTILLLVAAVLMSIQA. A propeptide spanning residues 20 to 44 is cleaved from the precursor; sequence VNQEKHQRAKMNLLSKRKPPAERWW. Disulfide bonds link Cys49/Cys63, Cys56/Cys67, and Cys62/Cys72.

This sequence belongs to the conotoxin O2 superfamily. As to expression, expressed by the venom duct.

It localises to the secreted. Its function is as follows. Inhibits voltage-gated ion channels. This chain is Conotoxin Vc6.7, found in Conus victoriae (Queen Victoria cone).